The primary structure comprises 117 residues: Large ribosomal subunit protein uL24 (117 aa).

Over residues methionine 1–lysine 10 the composition is skewed to basic residues. The interval methionine 1 to leucine 28 is disordered.

This sequence belongs to the universal ribosomal protein uL24 family. Part of the 50S ribosomal subunit.

Its function is as follows. One of two assembly initiator proteins, it binds directly to the 5'-end of the 23S rRNA, where it nucleates assembly of the 50S subunit. Located at the polypeptide exit tunnel on the outside of the subunit. This is Large ribosomal subunit protein uL24 from Methanobrevibacter smithii (strain ATCC 35061 / DSM 861 / OCM 144 / PS).